A 118-amino-acid chain; its full sequence is Small ribosomal subunit protein uS13 (118 aa).

The tract at residues 92 to 118 (RKGLPVRGQRTKTNARTRKGPRKPIRK) is disordered.

It belongs to the universal ribosomal protein uS13 family. Part of the 30S ribosomal subunit. Forms a loose heterodimer with protein S19. Forms two bridges to the 50S subunit in the 70S ribosome.

In terms of biological role, located at the top of the head of the 30S subunit, it contacts several helices of the 16S rRNA. In the 70S ribosome it contacts the 23S rRNA (bridge B1a) and protein L5 of the 50S subunit (bridge B1b), connecting the 2 subunits; these bridges are implicated in subunit movement. Contacts the tRNAs in the A and P-sites. This chain is Small ribosomal subunit protein uS13, found in Pseudomonas putida (strain W619).